The primary structure comprises 166 residues: Specificity protein transcription factor 2 (166 aa).

Residues 17-45 (SYHHSLPSISPPDSPASTSASSSSSSIGA) form a disordered region. The segment covering 31–42 (PASTSASSSSSS) has biased composition (low complexity). 3 consecutive C2H2-type zinc fingers follow at residues 77 to 101 (HLCSVPGCGKTYKKTSHLRAHLRKH), 107 to 131 (FVCDWFDCGKRFDRSDQLIRHKRTH), and 137 to 160 (FACKFCIRQFSRSDHLQQHLTSVH).

Belongs to the Sp1 C2H2-type zinc-finger protein family.

Transcription factor. Probably acts downstream of the Wnt signaling pathway. This chain is Specificity protein transcription factor 2, found in Caenorhabditis elegans.